Here is a 189-residue protein sequence, read N- to C-terminus: Protein Rex (189 aa).

The segment covering 1-16 (MPKTRRGPRRSQRKRP) has biased composition (basic residues). The disordered stretch occupies residues 1–26 (MPKTRRGPRRSQRKRPPTPWPTSQGL). The Nuclear localization signal, and RNA-binding (RxRE) signature appears at 2 to 18 (PKTRRGPRRSQRKRPPT). The homomultimerization stretch occupies residues 56-70 (RPAYIVTPYWPPVQS). Residue Ser-70 is modified to Phosphoserine; by host. The short motif at 82 to 93 (LSAQLYSSLSLG) is the Nuclear export signal element. Positions 87–189 (YSSLSLGSPP…PPSPGPSCPR (103 aa)) are disordered. Residues 115–125 (IQPPTFHPPSS) are compositionally biased toward pro residues. Positions 123–131 (PSSRPYANT) are homomultimerization. Thr-174 is modified (phosphothreonine; by host). Phosphoserine; by host is present on Ser-177. Positions 178–189 (FPPPSPGPSCPR) are enriched in pro residues.

Belongs to the deltaretrovirus Rex protein family. In terms of assembly, homomultimer. Multimeric assembly is essential for activity and involves XPO1. Binds to human XPO1 and KPNB1. Interacts (via N-terminal nuclear localization signal) with human NPM1. Phosphorylated.

It localises to the host nucleus. It is found in the host nucleolus. The protein resides in the host cytoplasm. Rex escorts unspliced gag-pro-pol and singly spliced env mRNAs out of the nucleus of infected cells. These mRNAs carry a recognition sequence called Rex responsive element (RxRE or XRE) located at the 3' region of the long terminal repeat (LTR). This function is essential since most HTLV proteins are translated from unspliced or partially spliced pre-mRNAs that cannot exit the nucleus by the pathway used by fully processed cellular mRNAs. Rex itself is translated from a fully spliced mRNA that probably readily exits the nucleus. Rex's nuclear localization signal (NLS) binds directly to KPNB1/importin beta-1 without previous binding to KPNA1/importin alpha-1. KPNB1 binds to the GDP bound form of RAN (Ran-GDP) and targets Rex to the nucleus. In the nucleus, the conversion from Ran-GDP to Ran-GTP dissociates Rex from KPNB1 and allows Rex's binding to the RRE in viral pre-mRNAs. Rex multimerizes on the RRE via cooperative assembly. This multimerization is critical for its full biological activity, since it may shield the viral RNA from being spliced or down-regulated, and probably exposes Rex's nuclear export signal (NES) to the surface. Rex can then form a complex with XPO1/CRM1, RANBP3 and Ran-GTP, leading to nuclear export of the complex. Conversion from Ran-GTP to Ran-GDP mediates dissociation of the Rex/RRE/XPO1/RANBP3/RAN complex, so that Rex can return to the nucleus for a subsequent round of export. The protein is Protein Rex of Homo sapiens (Human).